Reading from the N-terminus, the 137-residue chain is Structural protein A137R (137 aa).

Belongs to the asfivirus A137R family. As to quaternary structure, interacts with host TBK1.

Its subcellular location is the virion. It localises to the host cytoplasm. In terms of biological role, plays a role in the inhibition of the host innate immune response. Mechanistically, promotes the autophagy-mediated lysosomal degradation of host TBK1 and affects IRF3 nuclear translocation to block type I IFN production. This is Structural protein A137R from African swine fever virus (isolate Warthog/Namibia/Wart80/1980) (ASFV).